Consider the following 294-residue polypeptide: MHNTTKRVTVPALEAMLYETIKVLDHGFIRVIDYMGDDSSIVQAARVSYGKGTKQLNQDKGLINYLLRHYHTTPFEMCDIKFHIKLPIFIARQWIRHRTASVNEYSARYSILGNEFYLPDPANIASQSVVNKQCRAGDSVPKKVSEKVLAILEEDARRCYRHYKELMNADEDGNILDENVSGIARELARINLTLNYYTEWYWKINLHNLLHFLRLRTDPKAQYEIRVYAEKILDIVKAWVPFTYEAFEEYRLQGANISRKGLEVIKRMIKGEKVIHETSGMNKREWEELVKIFR.

The region spanning 27 to 250 (GFIRVIDYMG…PFTYEAFEEY (224 aa)) is the ThyX domain. Residues Thr-73, 96-98 (RHR), and Glu-104 contribute to the FAD site. Residues 93–96 (QWIR), 104–108 (EYSAR), and Arg-189 contribute to the dUMP site. A ThyX motif motif is present at residues 96–106 (RHRTASVNEYS). FAD contacts are provided by residues 205–207 (NLH) and His-211. Arg-216 provides a ligand contact to dUMP. The Involved in ionization of N3 of dUMP, leading to its activation role is filled by Arg-216.

Belongs to the thymidylate synthase ThyX family. In terms of assembly, homotetramer. FAD serves as cofactor.

The enzyme catalyses dUMP + (6R)-5,10-methylene-5,6,7,8-tetrahydrofolate + NADPH + H(+) = dTMP + (6S)-5,6,7,8-tetrahydrofolate + NADP(+). The protein operates within pyrimidine metabolism; dTTP biosynthesis. In terms of biological role, catalyzes the reductive methylation of 2'-deoxyuridine-5'-monophosphate (dUMP) to 2'-deoxythymidine-5'-monophosphate (dTMP) while utilizing 5,10-methylenetetrahydrofolate (mTHF) as the methyl donor, and NADPH and FADH(2) as the reductant. This chain is Flavin-dependent thymidylate synthase, found in Rickettsia prowazekii (strain Madrid E).